The following is an 891-amino-acid chain: DNA mismatch repair protein MutS (891 aa).

ATP is bound at residue 646-653 (GPNMAGKS).

This sequence belongs to the DNA mismatch repair MutS family.

Its function is as follows. This protein is involved in the repair of mismatches in DNA. It is possible that it carries out the mismatch recognition step. This protein has a weak ATPase activity. This Rickettsia typhi (strain ATCC VR-144 / Wilmington) protein is DNA mismatch repair protein MutS.